The chain runs to 384 residues: MKTTISVIKADIGSLAGHHIVHPDTMAAANKVLASAKEQGIILDYYITHVGDDLQLIMTHTRGELDTKVHETAWNAFKEAAKVAKDLGLYAAGQDLLSDSFSGNVRGLGPGVAEMEIEERASEPIAIFMADKTEPGAYNLPLYKMFADPFNTPGLVIDPTMHGGFKFEVLDVYQGEAVMLSAPQEIYDLLALIGTPARYVIRRVYRNEDNLLAAVVSIERLNLIAGKYVGKDDPVMIVRLQHGLPALGEALEAFAFPHLVPGWMRGSHYGPLMPVSQRDAKATRFDGPPRLLGLGFNVKNGRLVGPTDLFDDPAFDETRRLANIVADYMRRHGPFMPHRLEPTEMEYTTLPLILEKLKDRFKKESDVYKAKESIYAKEESQGHD.

D11 serves as the catalytic Proton acceptor; for FBP phosphatase activity. D11, H18, D52, and D53 together coordinate Mg(2+). A beta-D-fructose 1,6-bisphosphate-binding site is contributed by H18. Residue H18 coordinates dihydroxyacetone phosphate. Y90 provides a ligand contact to beta-D-fructose 1,6-bisphosphate. Q94 lines the Mg(2+) pocket. 103 to 104 (GN) lines the beta-D-fructose 1,6-bisphosphate pocket. D131 lines the Mg(2+) pocket. Residue K132 participates in beta-D-fructose 1,6-bisphosphate binding. Residue K132 participates in dihydroxyacetone phosphate binding. Y228 (proton donor/acceptor; for FBP aldolase activity) is an active-site residue. Residues K231, D232, and D233 each coordinate Mg(2+). K231 acts as the Schiff-base intermediate with DHAP; for FBP aldolase activity in catalysis. Beta-D-fructose 1,6-bisphosphate-binding positions include 241 to 242 (QH), R265, D286, and Y347. The dihydroxyacetone phosphate site is built by R265 and D286.

It belongs to the FBP aldolase/phosphatase family. In terms of assembly, homooctamer; dimer of tetramers. Mg(2+) is required as a cofactor.

The catalysed reaction is beta-D-fructose 1,6-bisphosphate + H2O = beta-D-fructose 6-phosphate + phosphate. It carries out the reaction beta-D-fructose 1,6-bisphosphate = D-glyceraldehyde 3-phosphate + dihydroxyacetone phosphate. The protein operates within carbohydrate biosynthesis; gluconeogenesis. Catalyzes two subsequent steps in gluconeogenesis: the aldol condensation of dihydroxyacetone phosphate (DHAP) and glyceraldehyde-3-phosphate (GA3P) to fructose-1,6-bisphosphate (FBP), and the dephosphorylation of FBP to fructose-6-phosphate (F6P). This chain is Fructose-1,6-bisphosphate aldolase/phosphatase, found in Sulfurisphaera tokodaii (strain DSM 16993 / JCM 10545 / NBRC 100140 / 7) (Sulfolobus tokodaii).